The primary structure comprises 295 residues: UDP-N-acetylenolpyruvoylglucosamine reductase (295 aa).

The region spanning 25–189 is the FAD-binding PCMH-type domain; the sequence is RVGGPADLFA…LEALFRLDQR (165 aa). Arg-169 is a catalytic residue. Residue Ser-218 is the Proton donor of the active site. Residue Glu-288 is part of the active site.

The protein belongs to the MurB family. It depends on FAD as a cofactor.

It localises to the cytoplasm. It catalyses the reaction UDP-N-acetyl-alpha-D-muramate + NADP(+) = UDP-N-acetyl-3-O-(1-carboxyvinyl)-alpha-D-glucosamine + NADPH + H(+). The protein operates within cell wall biogenesis; peptidoglycan biosynthesis. Its function is as follows. Cell wall formation. The sequence is that of UDP-N-acetylenolpyruvoylglucosamine reductase from Pelobacter propionicus (strain DSM 2379 / NBRC 103807 / OttBd1).